The chain runs to 1033 residues: MDSRLNRIQSKMKLWIKDKNLSNPSIPLKVLNKSFRSSRQSSVSNGHGLYSLDRDETESLMSSHEASNAGISLDSSFRVIQVGQPEPQYGNNAVTNTKYDLFTFLPKCLYEQFRYFYNMYFLLVSLSQLIPPLKIGYLSTYIAPLIFVLLITLTKEAVDDLKRRRRDSYANNEIYTVNDSPCAAQNIQAGDVVYIAKDQRIPADMILLETTVGNEAFIRTDQLDGETDWKLRIPCSNQHTEGIVHADAPIKSVHHFYGTFTLNNQKRPISVDHTLWANTVLASDGVYGVVVYTGKDTRQSMNSSKAKTKVGLLEKEINFYSKILCTFVLVLSIGLTFSHGIKTDWYISVFRYLILFSSIIPINLRVNLDLAKIVHSKNTESDPNLPGVVVRSSNIPEELGRIEYVLTDKTGTLTQNEMEMKKLHVGTMGFSAESMDVVQACIQNYSTPIPLSEDSKTLVRNLVLALSLCHNVTPSKGHDGVVSYQAASPDEVAIVKWTSTLGLVLTNRTRDAITLNNNVYKILNIFPFKSETKRMGIIVQSPDEKITFYLKGADSIMQNFVKPSFWLEEECGNLAREGLRTLVVAKKDLSAEEYSAFSLAHSDASLSFSNSRDKKMEEIVSRYLENDMDLLGLTGVEDKLQKDVKITLELLRNAGIHVWMLTGDKVETARCIAISSRLVSRGQYIHTINQLSSREEAHNHLLTLRNKPDSCLIIDGESMEFCIGYLQNEFIDIVSDLSSVVICRCTPTQKANMTRLIQEKKQASVCCIGDGGNDVGMIQVANVGIGIVGKEGQQASLAADYSVKEFSHVSRLLLWHGRISYKQTSKLAMFVIHRGLLISVCQVVYSVISAFEPIALFQGLLLVGYSTMYTMLPVFSIVYDRDVSEKLVFLFPELYKEMREQKCFSYKNFISCVLISVYQGLIIQLFTFYLIGFEEEGKMLAVCFSCLIFNELIMVALQINTWEQTIVMSELLTLMMYILSVPFLTNYFELKFLLGLKFYWVSALILFISLLPVWCGKALKRKLKPSSYAKLQR.

4 helical membrane passes run 133–153 (LKIG…LITL), 274–294 (TLWA…VYTG), 317–337 (INFY…GLTF), and 344–364 (DWYI…PINL). Asp408 serves as the catalytic 4-aspartylphosphate intermediate. 15 residues coordinate ATP: Asp408, Lys409, Thr410, Glu491, Phe528, Ser530, Lys533, Lys551, Arg580, Thr581, Thr662, Gly663, Asp664, Arg744, and Lys750. Residue Asp408 participates in Mg(2+) binding. Residue Thr410 coordinates Mg(2+). The next 6 helical transmembrane spans lie at 768 to 788 (IGDG…IGIV), 843 to 863 (VVYS…LLLV), 913 to 933 (VLIS…LIGF), 939 to 959 (MLAV…ALQI), 965 to 985 (TIVM…PFLT), and 992 to 1012 (FLLG…SLLP). A Mg(2+)-binding site is contributed by Asp770. ATP contacts are provided by Asn773 and Asp774. Residue Asp774 participates in Mg(2+) binding.

It belongs to the cation transport ATPase (P-type) (TC 3.A.3) family. Type IV subfamily. As to quaternary structure, functions without a CDC50/LEM3 family accessory subunit. It depends on Mg(2+) as a cofactor.

Its subcellular location is the endosome membrane. The protein resides in the golgi apparatus membrane. It catalyses the reaction ATP + H2O + phospholipidSide 1 = ADP + phosphate + phospholipidSide 2.. It carries out the reaction a 1,2-diacyl-sn-glycero-3-phospho-L-serine(out) + ATP + H2O = a 1,2-diacyl-sn-glycero-3-phospho-L-serine(in) + ADP + phosphate + H(+). The enzyme catalyses a 1,2-diacyl-sn-glycero-3-phosphoethanolamine(out) + ATP + H2O = a 1,2-diacyl-sn-glycero-3-phosphoethanolamine(in) + ADP + phosphate + H(+). In terms of biological role, flippase that catalyzes the hydrolysis of ATP coupled to the transport of lysophosphatidylserine, phosphatidylethanolamine, and phosphatidylserine from the lumenal to the cytosolic leaflet of the Golgi apparatus membrane and ensures the maintenance of asymmetric distribution of phospholipids. In Schizosaccharomyces pombe (strain 972 / ATCC 24843) (Fission yeast), this protein is Phospholipid-transporting ATPase neo1.